Consider the following 299-residue polypeptide: Bifunctional protein FolD (299 aa).

NADP(+)-binding positions include Gly-168–Ser-170, Ser-193, and Ile-234.

This sequence belongs to the tetrahydrofolate dehydrogenase/cyclohydrolase family. Homodimer.

The enzyme catalyses (6R)-5,10-methylene-5,6,7,8-tetrahydrofolate + NADP(+) = (6R)-5,10-methenyltetrahydrofolate + NADPH. It carries out the reaction (6R)-5,10-methenyltetrahydrofolate + H2O = (6R)-10-formyltetrahydrofolate + H(+). It functions in the pathway one-carbon metabolism; tetrahydrofolate interconversion. Its function is as follows. Catalyzes the oxidation of 5,10-methylenetetrahydrofolate to 5,10-methenyltetrahydrofolate and then the hydrolysis of 5,10-methenyltetrahydrofolate to 10-formyltetrahydrofolate. The polypeptide is Bifunctional protein FolD (Brucella anthropi (strain ATCC 49188 / DSM 6882 / CCUG 24695 / JCM 21032 / LMG 3331 / NBRC 15819 / NCTC 12168 / Alc 37) (Ochrobactrum anthropi)).